A 577-amino-acid polypeptide reads, in one-letter code: 2-succinyl-5-enolpyruvyl-6-hydroxy-3-cyclohexene-1-carboxylate synthase (577 aa).

The protein belongs to the TPP enzyme family. MenD subfamily. Homodimer. Requires Mg(2+) as cofactor. Mn(2+) serves as cofactor. It depends on thiamine diphosphate as a cofactor.

It carries out the reaction isochorismate + 2-oxoglutarate + H(+) = 5-enolpyruvoyl-6-hydroxy-2-succinyl-cyclohex-3-ene-1-carboxylate + CO2. The protein operates within quinol/quinone metabolism; 1,4-dihydroxy-2-naphthoate biosynthesis; 1,4-dihydroxy-2-naphthoate from chorismate: step 2/7. It functions in the pathway quinol/quinone metabolism; menaquinone biosynthesis. Catalyzes the thiamine diphosphate-dependent decarboxylation of 2-oxoglutarate and the subsequent addition of the resulting succinic semialdehyde-thiamine pyrophosphate anion to isochorismate to yield 2-succinyl-5-enolpyruvyl-6-hydroxy-3-cyclohexene-1-carboxylate (SEPHCHC). The chain is 2-succinyl-5-enolpyruvyl-6-hydroxy-3-cyclohexene-1-carboxylate synthase from Porphyromonas gingivalis (strain ATCC BAA-308 / W83).